A 250-amino-acid chain; its full sequence is Eukaryotic translation initiation factor 2 subunit 2 (250 aa).

Residues 193-217 (CHTCKSPETQLTKDTRLFFLQCTNC) form a C4-type zinc finger.

Belongs to the eIF-2-beta/eIF-5 family. Eukaryotic translation initiation factor 2 eIF2 is a heterotrimeric complex composed of an alpha, a beta and a gamma subunit.

The protein resides in the cytoplasm. It localises to the cytosol. Component of the eIF2 complex that functions in the early steps of protein synthesis by forming a ternary complex with GTP and initiator tRNA. This complex binds to a 40S ribosomal subunit, followed by mRNA binding to form a 43S pre-initiation complex (43S PIC). Junction of the 60S ribosomal subunit to form the 80S initiation complex is preceded by hydrolysis of the GTP bound to eIF2 and release of an eIF2-GDP binary complex. In order for eIF2 to recycle and catalyze another round of initiation, the GDP bound to eIF2 must exchange with GTP by way of a reaction catalyzed by eIF2B. In Caenorhabditis elegans, this protein is Eukaryotic translation initiation factor 2 subunit 2.